A 681-amino-acid polypeptide reads, in one-letter code: MIDRDKHQQLRIGLASPEQICAWSKRILPNGRIVGQVTKPYTLHYKTNEPEKDGSFCERIFGPIKSGVCACGNSRVIGNEKENSKFCEQCGVEFVDSRIRRYRMGYIELACPVVHVWYSKRLPSYIANLLAKPLKESEGPVYCDLFIARPIANKPTSLRSRGPFKYEIQSWRDIIPHYFSARGFGAFRHREIATGGDAIREQLAGLNLQILMDRSYMEWKRLGKQKSAGNGWGDRKIQRRKDFSVRRMKLAKHFLQTDIEPEWMVLCPLPVLPPELRPIVQLGGGELITSDPNELYRRVIYRNNTLTDLLARSRSTPGGLVICQKKLVQEAVDALLDNGIRGQPMRDSHDRPYKSFSDVIEGKEGRSRENLLGKRVDYSGRSVIVVGPSLPLHQCGLPREIAIELFQAFVIRGLIRRHFAPNLRAAKSIIRDKEPIVWEVLQGVMQGHPVSLNRAPTLHRLGIQAFQPILVEGRAIRLHPLVCGGFNADSDGDQMAVHVPLSLEAQAEARLLMFSHTNLLSPAIGDPISVPTQDMLLGLYILTVGNNQGIYGNRYHPYYSKYKIFSCKKPSFYSYDDALGAHWQKRIELDSPLWFRWGVGLRIITSVDREAPIEVQYESLGIFHEIYEHYRIGKNEVGEILSIYIRTTVGRIRFDREIEEAIQGFSRASEHPNKSLPAIII.

Positions 69, 71, 87, and 90 each coordinate Zn(2+). Residues D489, D491, and D493 each coordinate Mg(2+).

It belongs to the RNA polymerase beta' chain family. RpoC1 subfamily. In plastids the minimal PEP RNA polymerase catalytic core is composed of four subunits: alpha, beta, beta', and beta''. When a (nuclear-encoded) sigma factor is associated with the core the holoenzyme is formed, which can initiate transcription. It depends on Mg(2+) as a cofactor. Requires Zn(2+) as cofactor.

The protein resides in the plastid. It localises to the chloroplast. It catalyses the reaction RNA(n) + a ribonucleoside 5'-triphosphate = RNA(n+1) + diphosphate. Its function is as follows. DNA-dependent RNA polymerase catalyzes the transcription of DNA into RNA using the four ribonucleoside triphosphates as substrates. In Cycas taitungensis (Prince sago), this protein is DNA-directed RNA polymerase subunit beta'.